The primary structure comprises 408 residues: Aminoacylase-1 (408 aa).

His80 serves as a coordination point for Zn(2+). Asp82 is an active-site residue. Asp113 lines the Zn(2+) pocket. The active-site Proton acceptor is the Glu147. Zn(2+)-binding residues include Glu148, Glu175, and His373.

Belongs to the peptidase M20A family. In terms of assembly, homodimer. Interacts with SPHK1. Requires Zn(2+) as cofactor.

The protein resides in the cytoplasm. It catalyses the reaction an N-acyl-L-amino acid + H2O = an L-alpha-amino acid + a carboxylate. It carries out the reaction N-acetyl-L-methionine + H2O = L-methionine + acetate. The catalysed reaction is N-acetyl-L-glutamine + H2O = L-glutamine + acetate. Catalyzes the hydrolysis of N-acetylated amino acids to acetate and free amino acids. In Mus musculus (Mouse), this protein is Aminoacylase-1 (Acy1).